The primary structure comprises 991 residues: Nonsense-mediated mRNA decay factor SMG8 (991 aa).

Disordered stretches follow at residues 16 to 41, 82 to 127, and 279 to 299; these read AWMG…PEPP, HQDP…EGNR, and PPRN…PKRR. Positions 95–110 are enriched in low complexity; the sequence is EAGAVGEAGGAEDPGA. Position 115 is a phosphoserine (S115). Positions 279–289 are enriched in basic and acidic residues; that stretch reads PPRNQDPAHPD. Over residues 290–299 the composition is skewed to basic residues; it reads KPKKHSPKRR. Phosphoserine occurs at positions 469 and 668. Positions 653–722 are disordered; the sequence is FEPSTPDPAP…PQAGGDNPEV (70 aa). The segment covering 675 to 684 has biased composition (basic and acidic residues); sequence DADKLKEKEP. The segment covering 685 to 706 has biased composition (polar residues); the sequence is QTQGESTSLSLALSLGQSTDSL. A phosphoserine mark is found at S742 and S895. R898 carries the post-translational modification Omega-N-methylarginine.

Belongs to the SMG8 family. Component of the SMG1C complex composed of SMG1, SMG8 and SMG9; the recruitment of SMG8 to SMG1 N-terminus induces a large conformational change in the SMG1 C-terminal head domain containing the catalytic domain. Forms heterodimers with SMG9; this assembly form may represent a SMG1C intermediate form. Post-translationally, phosphorylated by SMG1.

Its function is as follows. Involved in nonsense-mediated decay (NMD) of mRNAs containing premature stop codons. Is recruited by release factors to stalled ribosomes together with SMG1 and SMG9 (forming the SMG1C protein kinase complex) and, in the SMG1C complex, is required to mediate the recruitment of SMG1 to the ribosome:SURF complex and to suppress SMG1 kinase activity until the ribosome:SURF complex locates the exon junction complex (EJC). Acts as a regulator of kinase activity. This Homo sapiens (Human) protein is Nonsense-mediated mRNA decay factor SMG8 (SMG8).